We begin with the raw amino-acid sequence, 188 residues long: Elongation factor P (188 aa).

The protein belongs to the elongation factor P family.

The protein resides in the cytoplasm. It functions in the pathway protein biosynthesis; polypeptide chain elongation. Involved in peptide bond synthesis. Stimulates efficient translation and peptide-bond synthesis on native or reconstituted 70S ribosomes in vitro. Probably functions indirectly by altering the affinity of the ribosome for aminoacyl-tRNA, thus increasing their reactivity as acceptors for peptidyl transferase. In Chlorobium chlorochromatii (strain CaD3), this protein is Elongation factor P.